Reading from the N-terminus, the 654-residue chain is MSTLDSILKETRSFAPSEEFRRKASISGIEAYHALCEQADDHYLSFWGDLARELITWKKPFSRVLDDSQAPFFKWFDDGVLNASYNCLDRHLAANANKIAIIFEADDGEVTRVTYSELHRRVCQFANGLKSLGVKKGDRVVVYMPMGIEAVVTMQACARIGAIHSVVFGGFSAGAVRDRIQDAGATVVVTANESVRGGKNVPLKATVDEALALEGAESVRHVVVYQRTNGGADWTDGRDVWWHKLIEGQSEACEPEWMGAEDPLFILYTSGSTGKPKGIQHSTAGYLLGALNSFRWVFDYKPNDVFWCTADVGWITGHSYVCYGPLANGATQVIFEGVPTYPDAGRFWKMIEQHKVSIFYTAPTAIRSLIKLGSDLPKQYDLSSLRVLGTVGEPINPEAWIWYYETVGGGRCPIVDTWWQTETGSTMIAPLPGAIATKPGSCTLPLPGVIADIVDESGAQVEPGRGGFLVIKKPFPSLVRTIWNDPERFKKTYFPDEFDGKYYLAGDSAHRDENGYFWIMGRIDDVLNVSGHRLGTMEIESALVANPLVAEAAVVGKPHEVKGEAVVAFVVLKGARPQGDAAKTVAAELKNWVAHEIGKIAQPDDIRFGENLPKTRSGKIMRRLLRSIAKGEEITQDVSTLENPQILQQLQQPL.

CoA-binding positions include 196 to 199 (RGGK) and threonine 316. ATP-binding positions include 392–394 (GEP), 416–421 (DTWWQT), aspartate 507, and arginine 522. Residue serine 530 participates in CoA binding. Position 533 (arginine 533) interacts with ATP. Mg(2+)-binding residues include valine 544 and valine 549. Position 619 is an N6-acetyllysine (lysine 619).

This sequence belongs to the ATP-dependent AMP-binding enzyme family. Mg(2+) serves as cofactor. Acetylated. Deacetylation by the SIR2-homolog deacetylase activates the enzyme.

The catalysed reaction is acetate + ATP + CoA = acetyl-CoA + AMP + diphosphate. In terms of biological role, catalyzes the conversion of acetate into acetyl-CoA (AcCoA), an essential intermediate at the junction of anabolic and catabolic pathways. AcsA undergoes a two-step reaction. In the first half reaction, AcsA combines acetate with ATP to form acetyl-adenylate (AcAMP) intermediate. In the second half reaction, it can then transfer the acetyl group from AcAMP to the sulfhydryl group of CoA, forming the product AcCoA. The protein is Acetyl-coenzyme A synthetase of Chromobacterium violaceum (strain ATCC 12472 / DSM 30191 / JCM 1249 / CCUG 213 / NBRC 12614 / NCIMB 9131 / NCTC 9757 / MK).